Reading from the N-terminus, the 178-residue chain is Large ribosomal subunit protein uL6 (178 aa).

This sequence belongs to the universal ribosomal protein uL6 family. In terms of assembly, part of the 50S ribosomal subunit.

Functionally, this protein binds to the 23S rRNA, and is important in its secondary structure. It is located near the subunit interface in the base of the L7/L12 stalk, and near the tRNA binding site of the peptidyltransferase center. The chain is Large ribosomal subunit protein uL6 from Natranaerobius thermophilus (strain ATCC BAA-1301 / DSM 18059 / JW/NM-WN-LF).